A 305-amino-acid chain; its full sequence is Oxygen-dependent coproporphyrinogen-III oxidase (305 aa).

S99 serves as a coordination point for substrate. A divalent metal cation-binding residues include H103 and H113. Residue H113 is the Proton donor of the active site. Position 115–117 (115–117 (NVR)) interacts with substrate. Residues H152 and H182 each coordinate a divalent metal cation. The tract at residues 247–282 (YVEFNLVLDRGTLFGLQTGGRTESILMSMPPLARWE) is important for dimerization. Substrate is bound at residue 265–267 (GGR).

Belongs to the aerobic coproporphyrinogen-III oxidase family. Homodimer. A divalent metal cation is required as a cofactor.

Its subcellular location is the cytoplasm. It catalyses the reaction coproporphyrinogen III + O2 + 2 H(+) = protoporphyrinogen IX + 2 CO2 + 2 H2O. Its pathway is porphyrin-containing compound metabolism; protoporphyrin-IX biosynthesis; protoporphyrinogen-IX from coproporphyrinogen-III (O2 route): step 1/1. Its function is as follows. Involved in the heme biosynthesis. Catalyzes the aerobic oxidative decarboxylation of propionate groups of rings A and B of coproporphyrinogen-III to yield the vinyl groups in protoporphyrinogen-IX. This Vibrio cholerae serotype O1 (strain M66-2) protein is Oxygen-dependent coproporphyrinogen-III oxidase.